The following is a 380-amino-acid chain: Probable protein phosphatase 2C 2 (380 aa).

The PPM-type phosphatase domain maps to 122 to 376 (GYSVYCKRGK…DDISVMLIQL (255 aa)). Residues Asp-158, Gly-159, Asp-321, and Asp-367 each coordinate Mn(2+).

It belongs to the PP2C family. Mg(2+) serves as cofactor. The cofactor is Mn(2+).

The catalysed reaction is O-phospho-L-seryl-[protein] + H2O = L-seryl-[protein] + phosphate. It carries out the reaction O-phospho-L-threonyl-[protein] + H2O = L-threonyl-[protein] + phosphate. This chain is Probable protein phosphatase 2C 2, found in Arabidopsis thaliana (Mouse-ear cress).